A 136-amino-acid polypeptide reads, in one-letter code: General odorant-binding protein 57e (136 aa).

Positions 1 to 20 are cleaved as a signal peptide; that stretch reads MLDQLTLCLLLNFLCANVLA. 3 disulfide bridges follow: Cys-28–Cys-61, Cys-57–Cys-109, and Cys-98–Cys-118.

The protein belongs to the PBP/GOBP family.

Its function is as follows. Present in the aqueous fluid surrounding olfactory sensory dendrites and are thought to aid in the capture and transport of hydrophobic odorants into and through this fluid. This Drosophila melanogaster (Fruit fly) protein is General odorant-binding protein 57e.